Reading from the N-terminus, the 1995-residue chain is uncharacterized protein (1995 aa).

The next 7 membrane-spanning stretches (helical) occupy residues 31 to 51, 53 to 73, 106 to 126, 157 to 177, 212 to 232, 254 to 274, and 307 to 327; these read NYTE…EFFK, FFSF…PDIA, LVIF…ILPT, FLWL…WLSL, IFLL…PFIS, FLLI…SLLQ, and ILNF…IPYY. 2 disordered regions span residues 1418 to 1441 and 1848 to 1883; these read SLKK…HQFS and DLRW…KTNP. 2 stretches are compositionally biased toward basic residues: residues 1422–1441 and 1853–1863; these read SQIK…HQFS and PSSRTKQKRKD.

The protein belongs to the ycf78 family.

It is found in the plastid. The protein localises to the chloroplast membrane. Its function is as follows. Essential for cell growth. May be involved in binding chloroplast DNA to either the chloroplast envelope or the thylakoid membrane. This is an uncharacterized protein from Chlamydomonas reinhardtii (Chlamydomonas smithii).